The primary structure comprises 284 residues: Bifunctional protein FolD (284 aa).

NADP(+) contacts are provided by residues glycine 166–serine 168 and isoleucine 232.

This sequence belongs to the tetrahydrofolate dehydrogenase/cyclohydrolase family. Homodimer.

The catalysed reaction is (6R)-5,10-methylene-5,6,7,8-tetrahydrofolate + NADP(+) = (6R)-5,10-methenyltetrahydrofolate + NADPH. It carries out the reaction (6R)-5,10-methenyltetrahydrofolate + H2O = (6R)-10-formyltetrahydrofolate + H(+). Its pathway is one-carbon metabolism; tetrahydrofolate interconversion. Catalyzes the oxidation of 5,10-methylenetetrahydrofolate to 5,10-methenyltetrahydrofolate and then the hydrolysis of 5,10-methenyltetrahydrofolate to 10-formyltetrahydrofolate. This is Bifunctional protein FolD from Shewanella sediminis (strain HAW-EB3).